The sequence spans 491 residues: ATP synthase subunit beta, chloroplastic (491 aa).

Position 172–179 (172–179) interacts with ATP; the sequence is GGAGVGKT.

This sequence belongs to the ATPase alpha/beta chains family. As to quaternary structure, F-type ATPases have 2 components, CF(1) - the catalytic core - and CF(0) - the membrane proton channel. CF(1) has five subunits: alpha(3), beta(3), gamma(1), delta(1), epsilon(1). CF(0) has four main subunits: a(1), b(1), b'(1) and c(9-12).

It localises to the plastid. The protein localises to the chloroplast thylakoid membrane. It catalyses the reaction ATP + H2O + 4 H(+)(in) = ADP + phosphate + 5 H(+)(out). Functionally, produces ATP from ADP in the presence of a proton gradient across the membrane. The catalytic sites are hosted primarily by the beta subunits. In Pisum sativum (Garden pea), this protein is ATP synthase subunit beta, chloroplastic.